A 611-amino-acid chain; its full sequence is Phosphatidylinositol 3,4,5-trisphosphate 3-phosphatase and protein-tyrosine-phosphatase PTEN2A (611 aa).

Disordered stretches follow at residues 1–42 (MSSE…GVAS) and 87–109 (GIRL…SSAT). Phosphoserine is present on S91. Positions 100-109 (TTTEGTSSAT) are enriched in low complexity. The 180-residue stretch at 145–324 (RRYQEGGFDL…KYFERILTYF (180 aa)) folds into the Phosphatase tensin-type domain. The active-site Phosphocysteine intermediate is the C263. Positions 331 to 458 (GRRCMLRGFR…FMVEVVLADI (128 aa)) constitute a C2 tensin-type domain. Over residues 462–486 (IPTNPSSETASKTPEETSAANSSPV) the composition is skewed to polar residues. The segment at 462 to 589 (IPTNPSSETA…VNASSSSESE (128 aa)) is disordered. The segment covering 495–507 (PDKETENPDKDDV) has biased composition (basic and acidic residues). S509 is subject to Phosphoserine. Polar residues-rich tracts occupy residues 514 to 530 (DSTG…SQTP) and 549 to 565 (VSIS…QGVT).

The protein belongs to the PTEN phosphatase protein family. In terms of tissue distribution, expressed in seedlings, roots, stems, leaves, flowers and siliques. However, at protein level, not observed in older leaves and mature siliques.

The enzyme catalyses O-phospho-L-tyrosyl-[protein] + H2O = L-tyrosyl-[protein] + phosphate. It catalyses the reaction a 1,2-diacyl-sn-glycero-3-phospho-(1D-myo-inositol-3,4,5-trisphosphate) + H2O = a 1,2-diacyl-sn-glycero-3-phospho-(1D-myo-inositol-4,5-bisphosphate) + phosphate. In terms of biological role, binds phosphatidic acid. Protein tyrosine phosphatase that also exhibits lipid phosphatase activity. Hydrolyzed poorly p-nitrophenyl phosphate (p-NPP). Can use PtdIns isomers as substrates. Removes efficiently phosphate from the D3 position of the inositol ring, less from the D4 position and not at all from the D5 position on monophosphorylated PtdIns isomers (PIPs). The presence of a phosphate group in the D5 position on PIP(2) isomers reduces lipid phosphatase activity. Mostly active on PtdIns(3)P and PtdIns(3,4)P(2), to a lower extent, on PtdIns(4)P and PtdIns(3,5)P(2), but barely against PtdIns(3,4,5)P(3) as substrate. The sequence is that of Phosphatidylinositol 3,4,5-trisphosphate 3-phosphatase and protein-tyrosine-phosphatase PTEN2A from Arabidopsis thaliana (Mouse-ear cress).